A 236-amino-acid polypeptide reads, in one-letter code: Large ribosomal subunit protein uL3 (236 aa).

Residues 139 to 149 show a composition bias toward low complexity; the sequence is SVSHRSHGSTG. Positions 139–165 are disordered; that stretch reads SVSHRSHGSTGQRQDPGKVFKGKKMAG. Position 152 is an N5-methylglutamine (Q152).

The protein belongs to the universal ribosomal protein uL3 family. As to quaternary structure, part of the 50S ribosomal subunit. Forms a cluster with proteins L14 and L19. In terms of processing, methylated by PrmB.

One of the primary rRNA binding proteins, it binds directly near the 3'-end of the 23S rRNA, where it nucleates assembly of the 50S subunit. The chain is Large ribosomal subunit protein uL3 from Pelagibacter ubique (strain HTCC1062).